A 241-amino-acid chain; its full sequence is Endonuclease NucS (241 aa).

This sequence belongs to the NucS endonuclease family.

The protein resides in the cytoplasm. Functionally, cleaves both 3' and 5' ssDNA extremities of branched DNA structures. The polypeptide is Endonuclease NucS (Corynebacterium jeikeium (strain K411)).